A 533-amino-acid polypeptide reads, in one-letter code: MAVESQGGRPLVLGLLLCVLGPVVSHAGKILLIPVDGSHWLSMLGAIQQLQQRGHEIVVLAPDASLYIRDGAFYTLKTYPVPFQREDVKESFVSLGHNVFENDSFLQRVIKTYKKIKKDSAMLLSGCSHLLHNKELMASLAESSFDVMLTDPFLPCSPIVAQYLSLPTVFFLHALPCSLEFEATQCPNPFSYVPRPLSSHSDHMTFLQRVKNMLIAFSQNFLCDVVYSPYATLASEFLQREVTVQDLLSSASVWLFRSDFVKDYPRPIMPNMVFVGGINCLHQNPLSQEFEAYINASGEHGIVVFSLGSMVSEIPEKKAMAIADALGKIPQTVLWRYTGTRPSNLANNTILVKWLPQNDLLGHPMTRAFITHAGSHGVYESICNGVPMVMMPLFGDQMDNAKRMETKGAGVTLNVLEMTSEDLENALKAVINDKSYKENIMRLSSLHKDRPVEPLDLAVFWVEFVMRHKGAPHLRPAAHDLTWYQYHSLDVIGFLLAVVLTVAFITFKCCAYGYRKCLGKKGRVKKAHKSKTH.

A signal peptide spans 1–25 (MAVESQGGRPLVLGLLLCVLGPVVS). 3 N-linked (GlcNAc...) asparagine glycosylation sites follow: Asn-102, Asn-295, and Asn-347. A helical transmembrane segment spans residues 491–507 (VIGFLLAVVLTVAFITF).

The protein belongs to the UDP-glycosyltransferase family. As to quaternary structure, homodimer. Homooligomer. Interacts with UGT1A3, UGT1A4, UGT1A6, UGT1A7, UGT1A8, UGT1A9 and UGT1A10 to form heterodimers. Isoform 1 interacts with isoform 2/i2 suggesting that oligomerization is involved in negative regulation of transferase activity by isoform 2. Isoform 1 also interacts with respective i2 isoforms of UGT1A3, UGT1A4, UGT1A6, UGT1A7, UGT1A8, UGT1A9 and UGT1A10. In terms of tissue distribution, expressed in liver, colon and small intestine. Not expressed in kidney, esophagus and skin. As to expression, expressed in liver, colon, small intestine and kidney. Not expressed in esophagus and skin.

The protein resides in the endoplasmic reticulum membrane. It localises to the cytoplasm. The protein localises to the perinuclear region. It carries out the reaction glucuronate acceptor + UDP-alpha-D-glucuronate = acceptor beta-D-glucuronoside + UDP + H(+). It catalyses the reaction 17beta-estradiol + UDP-alpha-D-glucuronate = 17beta-estradiol 3-O-(beta-D-glucuronate) + UDP + H(+). The catalysed reaction is 2-hydroxyestrone + UDP-alpha-D-glucuronate = 2-hydroxyestrone 3-O-(beta-D-glucuronate) + UDP + H(+). The enzyme catalyses 2-hydroxy-17beta-estradiol + UDP-alpha-D-glucuronate = 2-hydroxy-17beta-estradiol 3-O-(beta-D-glucuronate) + UDP + H(+). It carries out the reaction 2-methoxy-17beta-estradiol + UDP-alpha-D-glucuronate = 2-methoxy-17beta-estradiol 3-O-(beta-D-glucuronate) + UDP + H(+). It catalyses the reaction 17alpha-estradiol + UDP-alpha-D-glucuronate = 17alpha-estradiol 3-O-(beta-D-glucuronate) + UDP + H(+). The catalysed reaction is 16beta,17beta-estriol + UDP-alpha-D-glucuronate = 16beta,17beta-estriol 16-O-(beta-D-glucuronate) + UDP + H(+). The enzyme catalyses losartan + UDP-alpha-D-glucuronate = losartan-2-N-beta-D-glucuronide + UDP. It carries out the reaction prunetin + UDP-alpha-D-glucuronate = prunetin-4'-O-beta-D-glucuronide + UDP. It catalyses the reaction SN-38 + UDP-alpha-D-glucuronate = SN-38 O-beta-D-glucuronide + UDP + H(+). The catalysed reaction is (4Z,15Z)-bilirubin IXalpha + UDP-alpha-D-glucuronate = (4Z,15Z)-bilirubin IXalpha C12-beta-D-glucuronoside + UDP. The enzyme catalyses (4Z,15Z)-bilirubin IXalpha + UDP-alpha-D-glucuronate = (4Z,15Z)-bilirubin IXalpha C8-beta-D-glucuronoside + UDP. It carries out the reaction (4Z,15Z)-bilirubin IXalpha C8-beta-D-glucuronoside + UDP-alpha-D-glucuronate = (4Z,15Z)-bilirubin IXalpha C8,C12-beta-D-bisglucuronoside + UDP. It catalyses the reaction (4Z,15Z)-bilirubin IXalpha C12-beta-D-glucuronoside + UDP-alpha-D-glucuronate = (4Z,15Z)-bilirubin IXalpha C8,C12-beta-D-bisglucuronoside + UDP. The catalysed reaction is 8-iso-prostaglandin F2alpha + UDP-alpha-D-glucuronate = 8-iso-prostaglandin F2alpha-glucuronide + UDP + H(+). The enzyme catalyses (5Z,8Z,11Z,14Z)-eicosatetraenoate + UDP-alpha-D-glucuronate = O-[(5Z),(8Z),(11Z),(14Z)-eicosatetraenoyl]-beta-D-glucuronate + UDP. It carries out the reaction 15-hydroxy-(5Z,8Z,11Z,13E)-eicosatetraenoate + UDP-alpha-D-glucuronate = 15-O-(beta-D-glucuronosyl)-(5Z,8Z,11Z,14Z)-eicosatetraenoate + UDP + H(+). It catalyses the reaction 20-hydroxy-(5Z,8Z,11Z,14Z)-eicosatetraenoate + UDP-alpha-D-glucuronate = 20-O-(beta-D-glucuronosyl)-(5Z,8Z,11Z,14Z)-eicosatetraenoate + UDP + H(+). The catalysed reaction is prostaglandin B1 + UDP-alpha-D-glucuronate = 15-O-(beta-D-glucuronosyl)-prostaglandin B1 + UDP + H(+). The enzyme catalyses (E)-ferulate + UDP-alpha-D-glucuronate = (E)-4-O-(beta-D-glucuronosyl)-ferulate + UDP + H(+). It carries out the reaction (E)-ferulate + UDP-alpha-D-glucuronate = (E)-ferulic acid beta-D-glucuronate ester + UDP. In terms of biological role, UDP-glucuronosyltransferase (UGT) that catalyzes phase II biotransformation reactions in which lipophilic substrates are conjugated with glucuronic acid to increase the metabolite's water solubility, thereby facilitating excretion into either the urine or bile. Essential for the elimination and detoxification of drugs, xenobiotics and endogenous compounds. Catalyzes the glucuronidation of endogenous estrogen hormones such as estradiol, estrone and estriol. Involved in the glucuronidation of bilirubin, a degradation product occurring in the normal catabolic pathway that breaks down heme in vertebrates. Involved in the glucuronidation of arachidonic acid (AA) and AA-derived eicosanoids including 15-HETE, 20-HETE, PGB1 and F2-isoprostane (8-iso-PGF2alpha). Involved in the glucuronidation of the phytochemical ferulic acid at the phenolic or the carboxylic acid group. Also catalyzes the glucuronidation the isoflavones genistein, daidzein, glycitein, formononetin, biochanin A and prunetin, which are phytoestrogens with anticancer and cardiovascular properties. Involved in the glucuronidation of the AGTR1 angiotensin receptor antagonist losartan, a drug which can inhibit the effect of angiotensin II. Involved in the biotransformation of 7-ethyl-10-hydroxycamptothecin (SN-38), the pharmacologically active metabolite of the anticancer drug irinotecan. Its function is as follows. Lacks UGT glucuronidation activity but acts as a negative regulator of isoform 1. The protein is UDP-glucuronosyltransferase 1A1 of Homo sapiens (Human).